The following is a 309-amino-acid chain: DnaJ homolog subfamily B member 7 (309 aa).

Residues 3 to 69 form the J domain; it reads DYYEVLGLQR…EKRDIYDKYG (67 aa). The segment at 282-309 is disordered; sequence FSAGVKEGGKRKKKKRKEVQKKSTKRNC. Basic residues predominate over residues 290 to 309; it reads GKRKKKKRKEVQKKSTKRNC.

Functionally, probably acts as a co-chaperone. This Homo sapiens (Human) protein is DnaJ homolog subfamily B member 7 (DNAJB7).